The primary structure comprises 430 residues: Flavin-dependent monooxygenase eupH (430 aa).

FAD-binding positions include 11–14 (AGIG), 33–34 (ER), Q43, R107, Y282, and D306.

Belongs to the aromatic-ring hydroxylase family. FAD serves as cofactor.

It functions in the pathway secondary metabolite biosynthesis; terpenoid biosynthesis. In terms of biological role, flavin-dependent monooxygenase; part of the gene cluster that mediates the biosynthesis of eupenifeldin, a bistropolone meroterpenoid that acts as an antitumor agent. The first step of eupenifeldin biosynthesis is the biosynthesis of 3-methylorcinaldehyde performed by the non-reducing polyketide synthase eupA. Oxidative dearomatization of 3-methylorcinaldehyde likely catalyzed by the FAD-dependent monooxygenase eupB is followed by oxidative ring expansion by the 2-oxoglutarate-dependent dioxygenase eupC to provide the first tropolone metabolite, tropolone stipitaldehyde. In parallel, generation of sesquiterpene alpha-humulene from farnesylpyrophosphate (FPP) is catalyzed by the terpene cyclase eupE. The cytochrome P450 monooxygenase eupD then hydroxylates humulene to humulenol. The putative Diels-Alderase eupF probably catalyzes the formation of the tropolone-humulene skeleton by linking humulenol and the polyketide moiety. The short-chain dehydrogenase/reductase eupG and the flavin-dependent monooxygenase eupH are also essential for eupenifeldin biosynthesis and are likely the additional decorating enzymes of the tropolone-humulene skeleton to produce final eupenifeldin or derivatives. This is Flavin-dependent monooxygenase eupH from Phoma sp.